A 140-amino-acid polypeptide reads, in one-letter code: Odorant-binding protein 10 (140 aa).

A signal peptide spans 1–25 (MTSFRLANLTVFLVLLFCFMRGVHS).

It belongs to the PBP/GOBP family. High-level expression in female mouth parts, particularly in the proboscis (at protein level). Low-level expression in female antenna (at protein level). Female salivary gland. Female chemosensory organs: antenna, palp and proboscis. Male antenna, wing and maxillary palp. Expressed at higher levels in male tissues compared to female tissues. Not detected in midgut.

Its subcellular location is the secreted. Functionally, involved in modulation of blood-feeding behavior and capacity in female mosquitoes. Required for normal oviposition. Required for normal fecundity and fertility of female mosquitoes. Required for normal expression of VGA1 gene, which encodes the egg yolk protein vitellogenin-A1. Required for normal female longevity when mosquitoes are maintained on regular sugar meal. In terms of biological role, (Microbial infection) Facilitates shedding of dengue virus type 2 particles into mosquito saliva. Does not affect dengue virus type 2 replication or infection prevalence in midgut and salivary glands at 14 days after blood feeding. Its function is as follows. (Microbial infection) Facilitates shedding of Zika virus particles into mosquito saliva. Does not affect Zika virus replication or infection prevalence in midgut and salivary glands at 14 days after blood feeding. In Aedes aegypti (Yellowfever mosquito), this protein is Odorant-binding protein 10.